We begin with the raw amino-acid sequence, 715 residues long: Fatty acid oxidation complex subunit alpha (715 aa).

The segment at 1 to 190 is enoyl-CoA hydratase; that stretch reads MDMTSAFTLN…RVGLVDEVVP (190 aa). The 3-hydroxyacyl-CoA dehydrogenase stretch occupies residues 306-715; it reads GPLASVGVLG…WNSGETDLKE (410 aa).

It in the N-terminal section; belongs to the enoyl-CoA hydratase/isomerase family. In the central section; belongs to the 3-hydroxyacyl-CoA dehydrogenase family. Heterotetramer of two alpha chains (FadJ) and two beta chains (FadI).

The protein resides in the cytoplasm. The enzyme catalyses a (3S)-3-hydroxyacyl-CoA = a (2E)-enoyl-CoA + H2O. The catalysed reaction is a 4-saturated-(3S)-3-hydroxyacyl-CoA = a (3E)-enoyl-CoA + H2O. It carries out the reaction a (3S)-3-hydroxyacyl-CoA + NAD(+) = a 3-oxoacyl-CoA + NADH + H(+). It catalyses the reaction (3S)-3-hydroxybutanoyl-CoA = (3R)-3-hydroxybutanoyl-CoA. The protein operates within lipid metabolism; fatty acid beta-oxidation. Functionally, catalyzes the formation of a hydroxyacyl-CoA by addition of water on enoyl-CoA. Also exhibits 3-hydroxyacyl-CoA epimerase and 3-hydroxyacyl-CoA dehydrogenase activities. This is Fatty acid oxidation complex subunit alpha from Citrobacter koseri (strain ATCC BAA-895 / CDC 4225-83 / SGSC4696).